The primary structure comprises 311 residues: Mitoferrin (311 aa).

Solcar repeat units follow at residues 15-102 (HSIP…MKSF), 111-195 (EHTL…WQQV), and 202-302 (YDPK…FKFM). The next 6 helical transmembrane spans lie at 17–36 (IPVH…CVMF), 77–96 (GVNA…FTVY), 112–132 (HTLA…AVMN), 170–189 (SYTT…FMGY), 204–223 (PKSH…AVTT), and 277–296 (GLQA…WSVY).

Belongs to the mitochondrial carrier (TC 2.A.29) family.

It is found in the mitochondrion inner membrane. Mitochondrial iron transporter that mediates iron uptake. Probably required for heme synthesis of hemoproteins and Fe-S cluster assembly. This Caenorhabditis briggsae protein is Mitoferrin.